We begin with the raw amino-acid sequence, 381 residues long: Adaptive-response sensory kinase SasA (381 aa).

Residues 154 to 367 form the Histidine kinase domain; the sequence is MVAHELRTPL…CFYFTVPVWD (214 aa). At H157 the chain carries Phosphohistidine; by autocatalysis.

Homooligomerizes. Interacts with KaiC. Participates in the KaiBC complex, whose core is composed of a KaiC homohexamer and 6 KaiB.

The enzyme catalyses ATP + protein L-histidine = ADP + protein N-phospho-L-histidine.. Functionally, member of the two-component regulatory system SasA/RpaA involved in genome-wide circadian gene expression. One of several clock output pathways. Participates in the Kai clock protein complex, the main circadian regulator in cyanobacteria, via its interaction with KaiC. KaiC enhances the autophosphorylation activity of SasA, which then transfers its phosphate group to RpaA to activate it. In addition to its output function, recruits fold-shifted KaiB (KaiB(fs)) to KaiC to cooperatively form the KaiB(6):KaiC(6) complex (independent of SasA kinase activity). Required for robustness of the circadian rhythm of gene expression and is involved in clock output, also required for adaptation to light/dark cycles. This is Adaptive-response sensory kinase SasA from Prochlorococcus marinus (strain SARG / CCMP1375 / SS120).